The primary structure comprises 366 residues: Peptide chain release factor 2 (366 aa).

Gln-251 carries the N5-methylglutamine modification.

This sequence belongs to the prokaryotic/mitochondrial release factor family. Methylated by PrmC. Methylation increases the termination efficiency of RF2.

The protein resides in the cytoplasm. In terms of biological role, peptide chain release factor 2 directs the termination of translation in response to the peptide chain termination codons UGA and UAA. The sequence is that of Peptide chain release factor 2 from Campylobacter lari (strain RM2100 / D67 / ATCC BAA-1060).